The primary structure comprises 365 residues: Phosphoserine aminotransferase (365 aa).

R42 contacts L-glutamate. Pyridoxal 5'-phosphate is bound by residues 76–77, W103, T154, D175, and Q198; that span reads AR. K199 is subject to N6-(pyridoxal phosphate)lysine. 242-243 is a pyridoxal 5'-phosphate binding site; that stretch reads NT.

The protein belongs to the class-V pyridoxal-phosphate-dependent aminotransferase family. SerC subfamily. As to quaternary structure, homodimer. The cofactor is pyridoxal 5'-phosphate.

It is found in the cytoplasm. The enzyme catalyses O-phospho-L-serine + 2-oxoglutarate = 3-phosphooxypyruvate + L-glutamate. The catalysed reaction is 4-(phosphooxy)-L-threonine + 2-oxoglutarate = (R)-3-hydroxy-2-oxo-4-phosphooxybutanoate + L-glutamate. The protein operates within amino-acid biosynthesis; L-serine biosynthesis; L-serine from 3-phospho-D-glycerate: step 2/3. It functions in the pathway cofactor biosynthesis; pyridoxine 5'-phosphate biosynthesis; pyridoxine 5'-phosphate from D-erythrose 4-phosphate: step 3/5. Catalyzes the reversible conversion of 3-phosphohydroxypyruvate to phosphoserine and of 3-hydroxy-2-oxo-4-phosphonooxybutanoate to phosphohydroxythreonine. The protein is Phosphoserine aminotransferase of Blochmanniella floridana.